Reading from the N-terminus, the 227-residue chain is Cytidylate kinase (227 aa).

12 to 20 (GPSGAGKGT) lines the ATP pocket.

The protein belongs to the cytidylate kinase family. Type 1 subfamily.

Its subcellular location is the cytoplasm. The enzyme catalyses CMP + ATP = CDP + ADP. The catalysed reaction is dCMP + ATP = dCDP + ADP. This Shigella boydii serotype 4 (strain Sb227) protein is Cytidylate kinase.